The chain runs to 494 residues: Tripartite motif-containing protein 5 (494 aa).

Position 2 is an N-acetylalanine (A2). Residues 15–59 (CPICLELLTEPLSLDCGHSFCQACITANHKESTLHQGERSCPLCR) form an RING-type zinc finger. S86 bears the Phosphoserine mark. Residues 91–132 (QKVDLCARHGEKLLLFCQQDGNVICWLCERSQEHRGHHTFLV) form a B box-type zinc finger. Zn(2+) contacts are provided by C96, H99, C118, and H124. Positions 140-223 (RENLQVVLEM…RLVQSENDMV (84 aa)) form a coiled coil. The required for interaction with GABARAP and for autophagy stretch occupies residues 186–199 (FKQLRDILDCEESN). Residues 280–494 (PDLKGMLQVS…LPMTLCSPRS (215 aa)) form the B30.2/SPRY domain.

The protein belongs to the TRIM/RBCC family. Can form homodimers and homotrimers. In addition to lower-order dimerization, also exhibits a higher-order multimerization and both low- and high-order multimerizations are essential for its restriction activity. Interacts with BTBD1 and BTBD2. Interacts with PSMC4, PSMC5, PSMD7 and HSPA8/HSC70. Interacts (via B30.2/SPRY domain) with HSPA1A/B. Interacts with PSMC2, MAP3K7/TAK1, TAB2 and TAB3. Interacts with SQSTM1. Interacts with TRIM6 and TRIM34. Interacts with ULK1 (phosphorylated form), GABARAP, GABARAPL1, GABARAPL2, MAP1LC3A, MAP1LC3C and BECN1. Degraded in a proteasome-independent fashion in the absence of viral infection but in a proteasome-dependent fashion following exposure to restriction sensitive virus. Post-translationally, autoubiquitinated in a RING finger- and UBE2D2-dependent manner. Monoubiquitinated by TRIM21. Deubiquitinated by Yersinia YopJ. Ubiquitination may not lead to proteasomal degradation.

The protein localises to the cytoplasm. It is found in the nucleus. It catalyses the reaction S-ubiquitinyl-[E2 ubiquitin-conjugating enzyme]-L-cysteine + [acceptor protein]-L-lysine = [E2 ubiquitin-conjugating enzyme]-L-cysteine + N(6)-ubiquitinyl-[acceptor protein]-L-lysine.. It participates in protein modification; protein ubiquitination. In terms of biological role, capsid-specific restriction factor that prevents infection from non-host-adapted retroviruses. Blocks viral replication early in the life cycle, after viral entry but before reverse transcription. In addition to acting as a capsid-specific restriction factor, also acts as a pattern recognition receptor that activates innate immune signaling in response to the retroviral capsid lattice. Binding to the viral capsid triggers its E3 ubiquitin ligase activity, and in concert with the heterodimeric ubiquitin conjugating enzyme complex UBE2V1-UBE2N (also known as UBC13-UEV1A complex) generates 'Lys-63'-linked polyubiquitin chains, which in turn are catalysts in the autophosphorylation of the MAP3K7/TAK1 complex (includes TAK1, TAB2, and TAB3). Activation of the MAP3K7/TAK1 complex by autophosphorylation results in the induction and expression of NF-kappa-B and MAPK-responsive inflammatory genes, thereby leading to an innate immune response in the infected cell. Plays a role in regulating autophagy through activation of autophagy regulator BECN1 by causing its dissociation from its inhibitors BCL2 and TAB2. This is Tripartite motif-containing protein 5 (TRIM5) from Plecturocebus donacophilus (Bolivian gray titi monkey).